Consider the following 490-residue polypeptide: Probable cytosol aminopeptidase (490 aa).

Residues lysine 256 and aspartate 261 each coordinate Mn(2+). Residue lysine 268 is part of the active site. Positions 280, 340, and 342 each coordinate Mn(2+). Arginine 344 is a catalytic residue.

It belongs to the peptidase M17 family. The cofactor is Mn(2+).

It is found in the cytoplasm. It carries out the reaction Release of an N-terminal amino acid, Xaa-|-Yaa-, in which Xaa is preferably Leu, but may be other amino acids including Pro although not Arg or Lys, and Yaa may be Pro. Amino acid amides and methyl esters are also readily hydrolyzed, but rates on arylamides are exceedingly low.. The enzyme catalyses Release of an N-terminal amino acid, preferentially leucine, but not glutamic or aspartic acids.. Functionally, presumably involved in the processing and regular turnover of intracellular proteins. Catalyzes the removal of unsubstituted N-terminal amino acids from various peptides. This Prochlorococcus marinus (strain MIT 9313) protein is Probable cytosol aminopeptidase.